The following is a 554-amino-acid chain: Dihydroxy-acid dehydratase (554 aa).

A [2Fe-2S] cluster-binding site is contributed by Cys-48. Asp-80 contributes to the Mg(2+) binding site. Cys-121 provides a ligand contact to [2Fe-2S] cluster. The Mg(2+) site is built by Asp-122 and Lys-123. Residue Lys-123 is modified to N6-carboxylysine. Residue Cys-193 coordinates [2Fe-2S] cluster. Glu-444 is a Mg(2+) binding site. Catalysis depends on Ser-470, which acts as the Proton acceptor.

Belongs to the IlvD/Edd family. In terms of assembly, homodimer. It depends on [2Fe-2S] cluster as a cofactor. Requires Mg(2+) as cofactor.

It carries out the reaction (2R)-2,3-dihydroxy-3-methylbutanoate = 3-methyl-2-oxobutanoate + H2O. The catalysed reaction is (2R,3R)-2,3-dihydroxy-3-methylpentanoate = (S)-3-methyl-2-oxopentanoate + H2O. The protein operates within amino-acid biosynthesis; L-isoleucine biosynthesis; L-isoleucine from 2-oxobutanoate: step 3/4. Its pathway is amino-acid biosynthesis; L-valine biosynthesis; L-valine from pyruvate: step 3/4. In terms of biological role, functions in the biosynthesis of branched-chain amino acids. Catalyzes the dehydration of (2R,3R)-2,3-dihydroxy-3-methylpentanoate (2,3-dihydroxy-3-methylvalerate) into 2-oxo-3-methylpentanoate (2-oxo-3-methylvalerate) and of (2R)-2,3-dihydroxy-3-methylbutanoate (2,3-dihydroxyisovalerate) into 2-oxo-3-methylbutanoate (2-oxoisovalerate), the penultimate precursor to L-isoleucine and L-valine, respectively. In Tremblaya princeps, this protein is Dihydroxy-acid dehydratase.